A 972-amino-acid polypeptide reads, in one-letter code: Isoleucine--tRNA ligase (972 aa).

A 'HIGH' region motif is present at residues 63 to 73 (PYANGNIHIGH). Residue Glu603 participates in L-isoleucyl-5'-AMP binding. The short motif at 644–648 (KMSKS) is the 'KMSKS' region element. Lys647 is a binding site for ATP.

It belongs to the class-I aminoacyl-tRNA synthetase family. IleS type 1 subfamily. Monomer.

It localises to the cytoplasm. The catalysed reaction is tRNA(Ile) + L-isoleucine + ATP = L-isoleucyl-tRNA(Ile) + AMP + diphosphate. Catalyzes the attachment of isoleucine to tRNA(Ile). As IleRS can inadvertently accommodate and process structurally similar amino acids such as valine, to avoid such errors it has two additional distinct tRNA(Ile)-dependent editing activities. One activity is designated as 'pretransfer' editing and involves the hydrolysis of activated Val-AMP. The other activity is designated 'posttransfer' editing and involves deacylation of mischarged Val-tRNA(Ile). The protein is Isoleucine--tRNA ligase of Brucella melitensis biotype 1 (strain ATCC 23456 / CCUG 17765 / NCTC 10094 / 16M).